Consider the following 167-residue polypeptide: Leptin (167 aa).

The N-terminal stretch at 1 to 21 is a signal peptide; sequence MCWRPLCRFLWLWSYLSYVQA. Cysteine 117 and cysteine 167 form a disulfide bridge.

Belongs to the leptin family.

It localises to the secreted. In terms of biological role, key player in the regulation of energy balance and body weight control. Once released into the circulation, has central and peripheral effects by binding LEPR, found in many tissues, which results in the activation of several major signaling pathways. In the hypothalamus, acts as an appetite-regulating factor that induces a decrease in food intake and an increase in energy consumption by inducing anorexinogenic factors and suppressing orexigenic neuropeptides, also regulates bone mass and secretion of hypothalamo-pituitary-adrenal hormones. In the periphery, increases basal metabolism, influences reproductive function, regulates pancreatic beta-cell function and insulin secretion, is pro-angiogenic for endothelial cell and affects innate and adaptive immunity. In the arcuate nucleus of the hypothalamus, activates by depolarization POMC neurons inducing FOS and SOCS3 expression to release anorexigenic peptides and inhibits by hyperpolarization NPY neurons inducing SOCS3 with a consequent reduction on release of orexigenic peptides. In addition to its known satiety inducing effect, has a modulatory role in nutrient absorption. In the intestine, reduces glucose absorption by enterocytes by activating PKC and leading to a sequential activation of p38, PI3K and ERK signaling pathways which exerts an inhibitory effect on glucose absorption. Acts as a growth factor on certain tissues, through the activation of different signaling pathways increases expression of genes involved in cell cycle regulation such as CCND1, via JAK2-STAT3 pathway, or VEGFA, via MAPK1/3 and PI3K-AKT1 pathways. May also play an apoptotic role via JAK2-STAT3 pathway and up-regulation of BIRC5 expression. Pro-angiogenic, has mitogenic activity on vascular endothelial cells and plays a role in matrix remodeling by regulating the expression of matrix metalloproteinases (MMPs) and tissue inhibitors of metalloproteinases (TIMPs). In innate immunity, modulates the activity and function of neutrophils by increasing chemotaxis and the secretion of oxygen radicals. Increases phagocytosis by macrophages and enhances secretion of pro-inflammatory mediators. Increases cytotoxic ability of NK cells. Plays a pro-inflammatory role, in synergy with IL1B, by inducing NOS2 which promotes the production of IL6, IL8 and Prostaglandin E2, through a signaling pathway that involves JAK2, PI3K, MAP2K1/MEK1 and MAPK14/p38. In adaptive immunity, promotes the switch of memory T-cells towards T helper-1 cell immune responses. Increases CD4(+)CD25(-) T cells proliferation and reduces autophagy during TCR (T cell receptor) stimulation, through MTOR signaling pathway activation and BCL2 up-regulation. This Mus musculus (Mouse) protein is Leptin (Lep).